Consider the following 82-residue polypeptide: Small ribosomal subunit protein eS27A (82 aa).

Residues 37 to 59 form a C4-type zinc finger; that stretch reads CPGCLNITTVFSHAQTAVTCESC. Residue Cys-40 is modified to S-methylcysteine.

Belongs to the eukaryotic ribosomal protein eS27 family. Component of the small ribosomal subunit (SSU). Mature yeast ribosomes consist of a small (40S) and a large (60S) subunit. The 40S small subunit contains 1 molecule of ribosomal RNA (18S rRNA) and 33 different proteins (encoded by 57 genes). The large 60S subunit contains 3 rRNA molecules (25S, 5.8S and 5S rRNA) and 46 different proteins (encoded by 81 genes). Zn(2+) is required as a cofactor. The N-terminus is not modified.

The protein localises to the cytoplasm. In terms of biological role, component of the ribosome, a large ribonucleoprotein complex responsible for the synthesis of proteins in the cell. The small ribosomal subunit (SSU) binds messenger RNAs (mRNAs) and translates the encoded message by selecting cognate aminoacyl-transfer RNA (tRNA) molecules. The large subunit (LSU) contains the ribosomal catalytic site termed the peptidyl transferase center (PTC), which catalyzes the formation of peptide bonds, thereby polymerizing the amino acids delivered by tRNAs into a polypeptide chain. The nascent polypeptides leave the ribosome through a tunnel in the LSU and interact with protein factors that function in enzymatic processing, targeting, and the membrane insertion of nascent chains at the exit of the ribosomal tunnel. This is Small ribosomal subunit protein eS27A from Saccharomyces cerevisiae (strain ATCC 204508 / S288c) (Baker's yeast).